A 554-amino-acid chain; its full sequence is Valerianol synthase TPS1B (554 aa).

Asp307 and Asp311 together coordinate Mg(2+). The DDXXD motif motif lies at 326–330; it reads VQRWD. The Mg(2+) site is built by Asp452, Ser456, and Glu460.

Belongs to the terpene synthase family. It depends on Mg(2+) as a cofactor.

It carries out the reaction (2E,6E)-farnesyl diphosphate + H2O = valerianol + diphosphate. The protein operates within secondary metabolite biosynthesis; terpenoid biosynthesis. Functionally, terpene synthase that catalyzes the biosynthesis of the terpene valerianol, which is a volatile compound of floral scent. The protein is Valerianol synthase TPS1B of Camellia hiemalis (Camellia).